A 780-amino-acid chain; its full sequence is Putative ABC transporter ATP-binding protein BL0043 (780 aa).

2 consecutive ABC transporter domains span residues 2-238 (LKDI…QSET) and 282-531 (IRVS…GPAH). 34-41 (GPNGSGKS) provides a ligand contact to ATP. Positions 230–272 (AEAVSQSETEGSIGTEAAPSRPTNDSPRQREREDGSELPLLSD) are disordered. Residue 316 to 323 (GVNGSGKS) coordinates ATP. A run of 4 helical transmembrane segments spans residues 551 to 573 (FTMF…LAVI), 586 to 608 (SIHP…VRTG), 623 to 645 (GVTI…AVFL), and 759 to 778 (IAAR…AAII).

The protein belongs to the ABC transporter superfamily.

The protein resides in the cell membrane. Functionally, probably part of an ABC transporter complex. Responsible for energy coupling to the transport system. This Bifidobacterium longum (strain NCC 2705) protein is Putative ABC transporter ATP-binding protein BL0043.